The primary structure comprises 84 residues: Mitochondrial import inner membrane translocase subunit Tim9 (84 aa).

Residues 36–60 (CFQSCITNFRIRKLDDEEQLCVYKC) carry the Twin CX3C motif motif. 2 disulfides stabilise this stretch: cysteine 36–cysteine 60 and cysteine 40–cysteine 56.

The protein belongs to the small Tim family. As to quaternary structure, heterohexamer; composed of 3 copies of timm9 and 3 copies of timm10, named soluble 70 kDa complex. Associates directly with the TIM22 complex, whose core is composed of timm22. Interacts with the transmembrane regions of multi-pass transmembrane proteins in transit.

It localises to the mitochondrion inner membrane. Its function is as follows. Component of the TIM22 complex, a complex that mediates the import and insertion of multi-pass transmembrane proteins into the mitochondrial inner membrane. The TIM22 complex forms a twin-pore translocase that uses the membrane potential as external driving force. In Dictyostelium discoideum (Social amoeba), this protein is Mitochondrial import inner membrane translocase subunit Tim9 (timm9).